Here is a 483-residue protein sequence, read N- to C-terminus: ATP synthase subunit beta (483 aa).

162–169 (GGAGVGKT) lines the ATP pocket.

It belongs to the ATPase alpha/beta chains family. F-type ATPases have 2 components, CF(1) - the catalytic core - and CF(0) - the membrane proton channel. CF(1) has five subunits: alpha(3), beta(3), gamma(1), delta(1), epsilon(1). CF(0) has four main subunits: a(1), b(1), b'(1) and c(9-12).

The protein resides in the cellular thylakoid membrane. The catalysed reaction is ATP + H2O + 4 H(+)(in) = ADP + phosphate + 5 H(+)(out). Produces ATP from ADP in the presence of a proton gradient across the membrane. The catalytic sites are hosted primarily by the beta subunits. This chain is ATP synthase subunit beta, found in Synechocystis sp. (strain ATCC 27184 / PCC 6803 / Kazusa).